The sequence spans 232 residues: NKG2-D type II integral membrane protein (232 aa).

Topologically, residues 1–66 are cytoplasmic; the sequence is MALIRDRKSH…IEKLKISPMF (66 aa). A helical; Signal-anchor for type II membrane protein transmembrane segment spans residues 67–89; sequence VVRVLAIALAIRFTLNTLMWLAI. Over 90 to 232 the chain is Extracellular; the sequence is FKETFQPVLC…NTYICMKRAV (143 aa). 2 disulfides stabilise this stretch: Cys112-Cys121 and Cys115-Cys126. Residues 122–228 enclose the C-type lectin domain; the sequence is HRNNCYQFFN…CANLNTYICM (107 aa). N-linked (GlcNAc...) asparagine glycosylation is found at Asn137, Asn147, and Asn179. 2 cysteine pairs are disulfide-bonded: Cys143/Cys227 and Cys205/Cys219.

In terms of assembly, homodimer; disulfide-linked. Heterohexamer composed of two subunits of KLRK1 and four subunits of HCST/DAP10. Isoform 1 (via transmembrane domain) interacts with HCST/DAP10; the interaction is required for KLRK1 cell surface expression on activated CD8(+) T-cells, but is dispensable on activated TYROBP-expressing NK cells. Isoform 2 (via transmembrane domain) interacts with HCST/DAP10 (via transmembrane domain); the interaction is required for KLRK1 NK cell surface expression and induces NK cell-mediated cytotoxicity. Isoform 2 (via transmembrane domain) interacts with TYROBP (via transmembrane domain); the interaction is required for KLRK1 NK cell surface expression and induce NK cell-mediated cytotoxicity and cytokine secretion. Isoform 1 does not interact with TYROBP. Interacts with CEACAM1; recruits PTPN6 that dephosphorylates VAV1. As to expression, expressed in natural killer (NK) cells, activated CD8(+) alpha-beta and gamma-delta T-cells and natural killer T (NKT) cells (at protein level). May be expressed on dendritic cell (DC). Isoform 1 is strongly expressed in natural killer (NK) cells. Isoform 2 is weakly expressed in natural killer (NK) cells. Isoform 1 and isoform 2 are expressed in stimulated, but not in unstimulated, CD8(+) T-cells and macrophages.

It localises to the cell membrane. Its function is as follows. Functions as an activating and costimulatory receptor involved in immunosurveillance upon binding to various cellular stress-inducible ligands displayed at the surface of autologous tumor cells and virus-infected cells. Provides both stimulatory and costimulatory innate immune responses on activated killer (NK) cells, leading to cytotoxic activity. Acts as a costimulatory receptor for T-cell receptor (TCR) in CD8(+) T-cell-mediated adaptive immune responses by amplifying T-cell activation. Stimulates perforin-mediated elimination of ligand-expressing tumor cells. Signaling involves calcium influx, culminating in the expression of TNF-alpha. Participates in NK cell-mediated bone marrow graft rejection. May play a regulatory role in differentiation and survival of NK cells. Binds to ligands belonging to various subfamilies of MHC class I-related glycoproteins including RAET1A, RAET1B, RAET1C, RAET1D, RAET1E, H60 and MULT1. The sequence is that of NKG2-D type II integral membrane protein (Klrk1) from Mus musculus (Mouse).